A 429-amino-acid polypeptide reads, in one-letter code: Dual-specificity RNA methyltransferase RlmN (429 aa).

A disordered region spans residues 1–23; the sequence is MRAMQTHTEIAPMPIPGHVDPVP. The active-site Proton acceptor is Glu-128. Positions 134-397 constitute a Radical SAM core domain; the sequence is DADRGTLCVS…APVRTPRGRD (264 aa). A disulfide bond links Cys-141 and Cys-402. Residues Cys-148, Cys-152, and Cys-155 each coordinate [4Fe-4S] cluster. S-adenosyl-L-methionine-binding positions include 226–227, Ser-258, 280–282, and Asn-359; these read GE and SLH. Cys-402 acts as the S-methylcysteine intermediate in catalysis.

The protein belongs to the radical SAM superfamily. RlmN family. It depends on [4Fe-4S] cluster as a cofactor.

The protein localises to the cytoplasm. It catalyses the reaction adenosine(2503) in 23S rRNA + 2 reduced [2Fe-2S]-[ferredoxin] + 2 S-adenosyl-L-methionine = 2-methyladenosine(2503) in 23S rRNA + 5'-deoxyadenosine + L-methionine + 2 oxidized [2Fe-2S]-[ferredoxin] + S-adenosyl-L-homocysteine. The catalysed reaction is adenosine(37) in tRNA + 2 reduced [2Fe-2S]-[ferredoxin] + 2 S-adenosyl-L-methionine = 2-methyladenosine(37) in tRNA + 5'-deoxyadenosine + L-methionine + 2 oxidized [2Fe-2S]-[ferredoxin] + S-adenosyl-L-homocysteine. Specifically methylates position 2 of adenine 2503 in 23S rRNA and position 2 of adenine 37 in tRNAs. m2A2503 modification seems to play a crucial role in the proofreading step occurring at the peptidyl transferase center and thus would serve to optimize ribosomal fidelity. The chain is Dual-specificity RNA methyltransferase RlmN from Novosphingobium aromaticivorans (strain ATCC 700278 / DSM 12444 / CCUG 56034 / CIP 105152 / NBRC 16084 / F199).